The following is a 159-amino-acid chain: NADH-quinone oxidoreductase subunit I (159 aa).

2 4Fe-4S ferredoxin-type domains span residues Arg-51–Asp-80 and Thr-90–Asn-119. Positions 60, 63, 66, 70, 99, 102, 105, and 109 each coordinate [4Fe-4S] cluster.

It belongs to the complex I 23 kDa subunit family. As to quaternary structure, NDH-1 is composed of 14 different subunits. Subunits NuoA, H, J, K, L, M, N constitute the membrane sector of the complex. [4Fe-4S] cluster is required as a cofactor.

Its subcellular location is the cell membrane. It carries out the reaction a quinone + NADH + 5 H(+)(in) = a quinol + NAD(+) + 4 H(+)(out). Its function is as follows. NDH-1 shuttles electrons from NADH, via FMN and iron-sulfur (Fe-S) centers, to quinones in the respiratory chain. The immediate electron acceptor for the enzyme in this species is believed to be ubiquinone. Couples the redox reaction to proton translocation (for every two electrons transferred, four hydrogen ions are translocated across the cytoplasmic membrane), and thus conserves the redox energy in a proton gradient. The protein is NADH-quinone oxidoreductase subunit I of Rickettsia africae (strain ESF-5).